A 76-amino-acid polypeptide reads, in one-letter code: Conotoxin Vc6.9 (76 aa).

A signal peptide spans 1–19; sequence MEKLTILLLVAAVLMSTQA. Residues 20–41 constitute a propeptide that is removed on maturation; the sequence is LMQEQRQKAKINLFSKRKPSAE. 3 disulfides stabilise this stretch: cysteine 49–cysteine 63, cysteine 56–cysteine 67, and cysteine 62–cysteine 72.

Belongs to the conotoxin O2 superfamily. Expressed by the venom duct.

The protein localises to the secreted. Functionally, inhibits voltage-gated ion channels. This Conus victoriae (Queen Victoria cone) protein is Conotoxin Vc6.9.